A 109-amino-acid chain; its full sequence is MAQFEWVHAAWLALAIVLEIVANVFLKFSDGFRCKIFGLLSLAAVLAAFSALSQAVKGIDLSVAYALWGGFGIAATLAAGWILFGQRLNRKGWIGLVLLLAGMIMVKLA.

4 helical membrane passes run 6–26 (WVHAAWLALAIVLEIVANVFL), 36–56 (IFGLLSLAAVLAAFSALSQAV), 64–84 (AYALWGGFGIAATLAAGWILF), and 88–108 (LNRKGWIGLVLLLAGMIMVKL).

Belongs to the drug/metabolite transporter (DMT) superfamily. Small multidrug resistance (SMR) (TC 2.A.7.1) family. MdtI subfamily. As to quaternary structure, forms a complex with MdtJ.

The protein localises to the cell inner membrane. In terms of biological role, catalyzes the excretion of spermidine. The polypeptide is Spermidine export protein MdtI (Escherichia coli O81 (strain ED1a)).